The chain runs to 1170 residues: MGVQGLWKLLECSGHRVSPEALEGKVLAVDISIWLNQALKGVRDSHGNVIENAHLLTLFHRLCKLLFFRIRPIFVFDGDAPLLKKQTLAKRRQRKDSASIDSRKTTEKLLKTFLKRQALKTAFRSSRHEAPPSLTQVQRQDDIYVLPPLPEEEKHSSEEEDEKQWQARMDQKQALQEEFFHNPQAIDIESEDFSSLPPEVKHEILTDMKEFTKRRRTLFEAMPEESNDFSQYQLKGLLKKNYLNQHIENVQKEMNQQHSGQIQRQYQDEGGFLKEVESRRVVSEDTSHYILIKGIQGKKVMDVDSESLPSSSNVHSVSSNLKSSPHEKVKPEREPEAAPPSPRTLLAIQAAMLGSSSEDEPESREGRQSKERNSGATADAGSISPRTCAAIQKALDDDNDEKVSGSSDDLAEKMLLGSGLEQEEHADETAERGGGVPFDTAPLTPSVTEVKECVTSGSSANGQTDSAHSFTTASHRCDTPKETVSLARAVKEASQISSECEVEGRPAALSPAFIGTPSSHVSGVLSEREPTLAPPTTRTHSDQGIDIHPEDPELQNGLYPLETKCNSSRLSSDDETEGGQNPAPKACSTVHVPAEAMSNLENALPSNAEERGDFQETIQLREVPEAAARELISAPKPMGPMEMESEESESDGSFIEVQSVVSNSELQTESSEASTHLSEKDAEEPRETLEEGTSRDTECLLQDSSDIEAMEGHREADIDAEDMPNEWQDINLEELDALESNLLAEQNSLKAQKQQQDRIAASVTGQMFLESQELLRLFGVPYIQAPMEAEAQCAMLDLTDQTSGTITDDSDIWLFGARHVYKNFFNKNKFVEYYQYVDFYSQLGLDRNKLINLAYLLGSDYTEGIPTVGCVTAMEILNEFPGRGLDPLLKFSEWWHEAQNNKKVAENPYDTKVKKKLRKLQLTPGFPNPAVADAYLRPVVDDSRGSFLWGKPDVDKISTFCQRYFGWNRMKTDESLYPVLKHLNAHQTQLRIDSFFRLAQQEKQDAKLIKSHRLNRAVTCILRKEREEKAPELTKVTEALDDAKGKTQKRELPYKKETSVPKRRRPSGNGGFLGDPYCSESPQESSCEDGEGSSVMSARQRSAAESSKISCSDVPDLVRDPPHGRQGCVSTSSSSEDDEDKAKTVLVTARPVFGKKKLKLKSMKRRKKKT.

Residues 1–78 (MGVQGLWKLL…RIRPIFVFDG (78 aa)) form an N-domain region. K8 is modified (N6-acetyllysine). D30 provides a ligand contact to Mg(2+). The segment at 31–67 (ISIWLNQALKGVRDSHGNVIENAHLLTLFHRLCKLLF) is DNA-binding; may bind to the undamaged single-strand DNA of the DNA repair bubble. Residue D77 participates in Mg(2+) binding. Positions 79–784 (DAPLLKKQTL…LRLFGVPYIQ (706 aa)) are spacer region. 3 disordered regions span residues 304–479 (DSES…RCDT), 520–587 (HVSG…PKAC), and 600–701 (LENA…ECLL). The segment covering 306-323 (ESLPSSSNVHSVSSNLKS) has biased composition (low complexity). Composition is skewed to basic and acidic residues over residues 324-336 (SPHE…REPE) and 363-373 (SREGRQSKERN). At S384 the chain carries Phosphoserine. Positions 455–474 (TSGSSANGQTDSAHSFTTAS) are enriched in polar residues. Residues 539-551 (THSDQGIDIHPED) are compositionally biased toward basic and acidic residues. A compositionally biased stretch (polar residues) spans 659–676 (SVVSNSELQTESSEASTH). A compositionally biased stretch (basic and acidic residues) spans 677 to 698 (LSEKDAEEPRETLEEGTSRDTE). S704 and S705 each carry phosphoserine. An I-domain region spans residues 785 to 880 (APMEAEAQCA…VTAMEILNEF (96 aa)). Mg(2+) contacts are provided by E788, E790, D809, and D811. Residues 819–835 (HVYKNFFNKNKFVEYYQ) form a DNA-binding; may bind to the undamaged single-strand DNA of the DNA repair bubble region. Positions 847–879 (RNKLINLAYLLGSDYTEGIPTVGCVTAMEILNE) are DNA-binding; H2TH (helix-2turn-helix) motif which binds double-stranded DNA. Mg(2+) is bound at residue D860. Residues 911–917 (TKVKKKL) are DNA-binding; may bind double-stranded DNA. Residues 980–1008 (LKHLNAHQTQLRIDSFFRLAQQEKQDAKL) form an interaction with PCNA region. Residues 1010 to 1170 (KSHRLNRAVT…KSMKRRKKKT (161 aa)) form an interaction with ERCC6/CSB region. The segment at 1033–1146 (LTKVTEALDD…DDEDKAKTVL (114 aa)) is disordered. Residues 1041–1060 (DDAKGKTQKRELPYKKETSV) are compositionally biased toward basic and acidic residues. A Nuclear localization signal 1 motif is present at residues 1049–1065 (KRELPYKKETSVPKRRR). Polar residues predominate over residues 1094-1110 (SVMSARQRSAAESSKIS). The short motif at 1153-1170 (FGKKKLKLKSMKRRKKKT) is the Nuclear localization signal 2 element.

The protein belongs to the XPG/RAD2 endonuclease family. XPG subfamily. In terms of assembly, monomer. Homodimer. Component of the homologous recombination repair (HR) complex composed of ERCC5/XPG, BRCA2, PALB2, DSS1 and RAD51. Within the complex, interacts with BRCA2 and PALB2. Interacts with RNA polymerase II. Interacts (via C-terminus) with ERCC6/CSB; the interaction stimulates ERCC6/CSB binding to the DNA repair bubble and ERCC6/CSB ATPase activity. May form a complex composed of RNA polymerase II, ERCC6/CSB and ERCC5/XPG which associates with the DNA repair bubble during transcription-coupled nucleotide excision repair. Interacts with BRCA1; the interaction promotes the release of BRCA1 from DNA. Interacts with PCNA. Interacts with NTHL1; the interaction stimulates NTHL1 activity and NTHL1 binding to its DNA substrate. It depends on Mg(2+) as a cofactor.

The protein resides in the nucleus. It is found in the chromosome. Single-stranded structure-specific DNA endonuclease involved in DNA excision repair. Makes the 3'incision in DNA nucleotide excision repair (NER). Binds and bends DNA repair bubble substrate and breaks base stacking at the single-strand/double-strand DNA junction of the DNA bubble. Plays a role in base excision repair (BER) by promoting the binding of DNA glycosylase NTHL1 to its substrate and increasing NTHL1 catalytic activity that removes oxidized pyrimidines from DNA. Involved in transcription-coupled nucleotide excision repair (TCR) which allows RNA polymerase II-blocking lesions to be rapidly removed from the transcribed strand of active genes. Functions during the initial step of TCR in cooperation with ERCC6/CSB to recognized stalled RNA polymerase II. Also, stimulates ERCC6/CSB binding to the DNA repair bubble and ERCC6/CSB ATPase activity. Required for DNA replication fork maintenance and preservation of genomic stability. Involved in homologous recombination repair (HRR) induced by DNA replication stress by recruiting RAD51, BRCA2, and PALB2 to the damaged DNA site. During HRR, binds to the replication fork with high specificity and stabilizes it. Also, acts upstream of HRR, to promote the release of BRCA1 from DNA. The chain is DNA excision repair protein ERCC-5 (Ercc5) from Mus musculus (Mouse).